The primary structure comprises 341 residues: Cell division protein FtsQ (341 aa).

At 1 to 126 the chain is on the cytoplasmic side; that stretch reads MTETDEGAPV…VARGVVRGLK (126 aa). The chain crosses the membrane as a helical span at residues 127-147; that stretch reads TLFATVMFSIAGFGLGLALYV. Over 148–341 the chain is Extracellular; sequence TPAMSVRNIV…VSSPDLPTVK (194 aa). Residues 151 to 219 form the POTRA domain; sequence MSVRNIVVTG…SALRITIVER (69 aa).

Belongs to the FtsQ/DivIB family. FtsQ subfamily.

The protein localises to the cell membrane. In terms of biological role, essential cell division protein. In Mycobacterium leprae (strain Br4923), this protein is Cell division protein FtsQ.